The chain runs to 352 residues: tRNA pseudouridine synthase D (352 aa).

Asp-81 functions as the Nucleophile in the catalytic mechanism. Residues 157–303 enclose the TRUD domain; that stretch reads GVPNYFGLQR…MLHERRILRL (147 aa).

This sequence belongs to the pseudouridine synthase TruD family.

It carries out the reaction uridine(13) in tRNA = pseudouridine(13) in tRNA. Its function is as follows. Responsible for synthesis of pseudouridine from uracil-13 in transfer RNAs. This chain is tRNA pseudouridine synthase D, found in Azotobacter vinelandii (strain DJ / ATCC BAA-1303).